A 452-amino-acid polypeptide reads, in one-letter code: Pup--protein ligase (452 aa).

Residue glutamate 9 participates in Mg(2+) binding. Arginine 53 provides a ligand contact to ATP. Tyrosine 55 is a Mg(2+) binding site. Aspartate 57 acts as the Proton acceptor in catalysis. Glutamate 63 is a binding site for Mg(2+). ATP contacts are provided by threonine 66 and tryptophan 419.

Belongs to the Pup ligase/Pup deamidase family. Pup-conjugating enzyme subfamily.

The catalysed reaction is ATP + [prokaryotic ubiquitin-like protein]-L-glutamate + [protein]-L-lysine = ADP + phosphate + N(6)-([prokaryotic ubiquitin-like protein]-gamma-L-glutamyl)-[protein]-L-lysine.. It participates in protein degradation; proteasomal Pup-dependent pathway. Its pathway is protein modification; protein pupylation. Its function is as follows. Catalyzes the covalent attachment of the prokaryotic ubiquitin-like protein modifier Pup to the proteasomal substrate proteins, thereby targeting them for proteasomal degradation. This tagging system is termed pupylation. The ligation reaction involves the side-chain carboxylate of the C-terminal glutamate of Pup and the side-chain amino group of a substrate lysine. The sequence is that of Pup--protein ligase from Parafrankia sp. (strain EAN1pec).